A 350-amino-acid chain; its full sequence is Flap endonuclease 1 (350 aa).

The interval 1 to 102 (MGVNLKDLIP…KEIEKRRKIR (102 aa)) is N-domain. Mg(2+)-binding residues include aspartate 31, aspartate 84, glutamate 156, glutamate 158, aspartate 177, aspartate 179, and aspartate 240. The segment at 120-262 (AARRYAMMSA…KALQLVKAYK (143 aa)) is I-domain. Positions 341 to 349 (KQLGLEAWF) are interaction with PCNA.

This sequence belongs to the XPG/RAD2 endonuclease family. FEN1 subfamily. Interacts with PCNA. PCNA stimulates the nuclease activity without altering cleavage specificity. It depends on Mg(2+) as a cofactor.

In terms of biological role, structure-specific nuclease with 5'-flap endonuclease and 5'-3' exonuclease activities involved in DNA replication and repair. During DNA replication, cleaves the 5'-overhanging flap structure that is generated by displacement synthesis when DNA polymerase encounters the 5'-end of a downstream Okazaki fragment. Binds the unpaired 3'-DNA end and kinks the DNA to facilitate 5' cleavage specificity. Cleaves one nucleotide into the double-stranded DNA from the junction in flap DNA, leaving a nick for ligation. Also involved in the base excision repair (BER) pathway. Acts as a genome stabilization factor that prevents flaps from equilibrating into structures that lead to duplications and deletions. Also possesses 5'-3' exonuclease activity on nicked or gapped double-stranded DNA. This is Flap endonuclease 1 from Staphylothermus marinus (strain ATCC 43588 / DSM 3639 / JCM 9404 / F1).